A 657-amino-acid chain; its full sequence is Penicillin-binding protein activator LpoA (657 aa).

The N-terminal stretch at 1–25 (MLSSTFVRSKAGLVPVILAALILAA) is a signal peptide. A lipid anchor (N-palmitoyl cysteine) is attached at cysteine 26. Cysteine 26 carries the S-diacylglycerol cysteine lipid modification.

The protein belongs to the LpoA family. Interacts with PBP1a.

The protein resides in the cell outer membrane. Its function is as follows. Regulator of peptidoglycan synthesis that is essential for the function of penicillin-binding protein 1A (PBP1a). The sequence is that of Penicillin-binding protein activator LpoA from Yersinia pseudotuberculosis serotype O:1b (strain IP 31758).